Reading from the N-terminus, the 750-residue chain is Photosystem I P700 chlorophyll a apoprotein A1 (750 aa).

8 helical membrane passes run 70–93 (VFSA…FHGA), 156–179 (LYCT…FHYH), 195–219 (LNHH…HVSL), 291–309 (IAHH…GHMY), 346–369 (WHAQ…HHMY), 385–411 (LSLF…IFMV), 433–455 (AIIS…LYIH), and 531–549 (FLVH…LILL). Residues cysteine 573 and cysteine 582 each coordinate [4Fe-4S] cluster. The next 2 membrane-spanning stretches (helical) occupy residues 589 to 610 (HVFL…HFSW) and 664 to 686 (LSAY…MFLF). Chlorophyll a' is bound at residue histidine 675. Methionine 683 and tyrosine 691 together coordinate chlorophyll a. Tryptophan 692 is a phylloquinone binding site. A helical transmembrane segment spans residues 724–744 (AVGVTHYLLGGIATTWAFFLA).

Belongs to the PsaA/PsaB family. The PsaA/B heterodimer binds the P700 chlorophyll special pair and subsequent electron acceptors. PSI consists of a core antenna complex that captures photons, and an electron transfer chain that converts photonic excitation into a charge separation. The eukaryotic PSI reaction center is composed of at least 11 subunits. Requires P700 is a chlorophyll a/chlorophyll a' dimer, A0 is one or more chlorophyll a, A1 is one or both phylloquinones and FX is a shared 4Fe-4S iron-sulfur center. as cofactor.

Its subcellular location is the plastid. The protein resides in the chloroplast thylakoid membrane. It catalyses the reaction reduced [plastocyanin] + hnu + oxidized [2Fe-2S]-[ferredoxin] = oxidized [plastocyanin] + reduced [2Fe-2S]-[ferredoxin]. Its function is as follows. PsaA and PsaB bind P700, the primary electron donor of photosystem I (PSI), as well as the electron acceptors A0, A1 and FX. PSI is a plastocyanin-ferredoxin oxidoreductase, converting photonic excitation into a charge separation, which transfers an electron from the donor P700 chlorophyll pair to the spectroscopically characterized acceptors A0, A1, FX, FA and FB in turn. Oxidized P700 is reduced on the lumenal side of the thylakoid membrane by plastocyanin. This chain is Photosystem I P700 chlorophyll a apoprotein A1, found in Olimarabidopsis pumila (Dwarf rocket).